The primary structure comprises 448 residues: Probable alpha-galactosidase B (448 aa).

The signal sequence occupies residues 1–23 (MSRFHLPLAAAVVLVSCLWSANA). Cystine bridges form between Cys-46–Cys-78 and Cys-128–Cys-158. The active-site Nucleophile is Asp-156. N-linked (GlcNAc...) asparagine glycans are attached at residues Asn-163 and Asn-181. Residue 226–230 (EWGQA) participates in substrate binding. Asn-237 carries N-linked (GlcNAc...) asparagine glycosylation. The active-site Proton donor is Asp-248.

Belongs to the glycosyl hydrolase 27 family.

The protein localises to the secreted. The enzyme catalyses Hydrolysis of terminal, non-reducing alpha-D-galactose residues in alpha-D-galactosides, including galactose oligosaccharides, galactomannans and galactolipids.. Its function is as follows. Hydrolyzes a variety of simple alpha-D-galactoside as well as more complex molecules such as oligosaccharides and polysaccharides. This Aspergillus clavatus (strain ATCC 1007 / CBS 513.65 / DSM 816 / NCTC 3887 / NRRL 1 / QM 1276 / 107) protein is Probable alpha-galactosidase B (aglB).